We begin with the raw amino-acid sequence, 198 residues long: GTP cyclohydrolase-2 (198 aa).

52 to 56 is a GTP binding site; it reads RMHSE. Zn(2+)-binding residues include Cys57, Cys68, and Cys70. GTP-binding positions include Gln73, 94–96, and Thr116; that span reads EGR. Asp128 acts as the Proton acceptor in catalysis. The active-site Nucleophile is the Arg130. GTP is bound by residues Thr151 and Lys156.

This sequence belongs to the GTP cyclohydrolase II family. Zn(2+) serves as cofactor.

It carries out the reaction GTP + 4 H2O = 2,5-diamino-6-hydroxy-4-(5-phosphoribosylamino)-pyrimidine + formate + 2 phosphate + 3 H(+). It functions in the pathway cofactor biosynthesis; riboflavin biosynthesis; 5-amino-6-(D-ribitylamino)uracil from GTP: step 1/4. In terms of biological role, catalyzes the conversion of GTP to 2,5-diamino-6-ribosylamino-4(3H)-pyrimidinone 5'-phosphate (DARP), formate and pyrophosphate. The chain is GTP cyclohydrolase-2 from Vibrio cholerae serotype O1 (strain ATCC 39315 / El Tor Inaba N16961).